Reading from the N-terminus, the 212-residue chain is Adenylate kinase (212 aa).

ATP is bound at residue 14-19 (GSGKGT). Residues 34–63 (STGDLFRKKISEDSQFAAQIQNYLSSGSYV) form an NMP region. AMP contacts are provided by residues T35, R40, 61 to 63 (SYV), 89 to 92 (GYPR), and Q96. An LID region spans residues 126–163 (QRLFCQKCQKSYNLLLAKPKNELKCDLDSTDLITRNDD). R127 contributes to the ATP binding site. Residues C130 and C133 each contribute to the Zn(2+) site. 136–137 (SY) is an ATP binding site. Zn(2+) contacts are provided by C150 and D153. AMP-binding residues include R160 and R171. An ATP-binding site is contributed by Q199.

Belongs to the adenylate kinase family. As to quaternary structure, monomer.

It is found in the cytoplasm. It carries out the reaction AMP + ATP = 2 ADP. It participates in purine metabolism; AMP biosynthesis via salvage pathway; AMP from ADP: step 1/1. Catalyzes the reversible transfer of the terminal phosphate group between ATP and AMP. Plays an important role in cellular energy homeostasis and in adenine nucleotide metabolism. This Mesomycoplasma hyopneumoniae (strain J / ATCC 25934 / NCTC 10110) (Mycoplasma hyopneumoniae) protein is Adenylate kinase.